We begin with the raw amino-acid sequence, 464 residues long: Fumarate hydratase class II (464 aa).

Substrate contacts are provided by residues 96–98, 127–130, 137–139, and T185; these read SGT, HPND, and SSN. Catalysis depends on H186, which acts as the Proton donor/acceptor. The active site involves S316. Substrate is bound by residues S317 and 322–324; that span reads KVN.

The protein belongs to the class-II fumarase/aspartase family. Fumarase subfamily. In terms of assembly, homotetramer.

The protein resides in the cytoplasm. The catalysed reaction is (S)-malate = fumarate + H2O. The protein operates within carbohydrate metabolism; tricarboxylic acid cycle; (S)-malate from fumarate: step 1/1. Involved in the TCA cycle. Catalyzes the stereospecific interconversion of fumarate to L-malate. The chain is Fumarate hydratase class II from Pseudomonas syringae pv. tomato (strain ATCC BAA-871 / DC3000).